The primary structure comprises 311 residues: 5'-adenylylsulfate reductase-like 3 (311 aa).

A signal peptide spans 1-22 (MATRLLCWTALLLPIIAATAAA). The Thioredoxin domain maps to 23–164 (SPLPEACPVP…LAAFYRDVSG (142 aa)). Asn-139 is a glycosylation site (N-linked (GlcNAc...) asparagine). A helical membrane pass occupies residues 210–230 (LALATAFVILRLLYLLFPKIG). 2 N-linked (GlcNAc...) asparagine glycosylation sites follow: Asn-281 and Asn-305.

Its subcellular location is the membrane. The chain is 5'-adenylylsulfate reductase-like 3 (APRL3) from Oryza sativa subsp. japonica (Rice).